Consider the following 317-residue polypeptide: ADP-L-glycero-D-manno-heptose-6-epimerase (317 aa).

Residues 10–11 (FI), 31–32 (DD), Lys-38, Lys-53, 75–79 (QGACS), and Asn-92 each bind NADP(+). Tyr-139 functions as the Proton acceptor in the catalytic mechanism. Position 143 (Lys-143) interacts with NADP(+). Substrate is bound at residue Asn-166. NADP(+) is bound by residues Val-167 and Lys-175. Lys-175 functions as the Proton acceptor in the catalytic mechanism. Residues Gly-177, His-184, 198–201 (FQGH), Arg-211, and Tyr-275 each bind substrate.

This sequence belongs to the NAD(P)-dependent epimerase/dehydratase family. HldD subfamily. Homopentamer. The cofactor is NADP(+).

The enzyme catalyses ADP-D-glycero-beta-D-manno-heptose = ADP-L-glycero-beta-D-manno-heptose. It functions in the pathway nucleotide-sugar biosynthesis; ADP-L-glycero-beta-D-manno-heptose biosynthesis; ADP-L-glycero-beta-D-manno-heptose from D-glycero-beta-D-manno-heptose 7-phosphate: step 4/4. Catalyzes the interconversion between ADP-D-glycero-beta-D-manno-heptose and ADP-L-glycero-beta-D-manno-heptose via an epimerization at carbon 6 of the heptose. The sequence is that of ADP-L-glycero-D-manno-heptose-6-epimerase from Shewanella loihica (strain ATCC BAA-1088 / PV-4).